The sequence spans 463 residues: Argininosuccinate lyase (463 aa).

It belongs to the lyase 1 family. Argininosuccinate lyase subfamily.

It is found in the cytoplasm. It catalyses the reaction 2-(N(omega)-L-arginino)succinate = fumarate + L-arginine. It functions in the pathway amino-acid biosynthesis; L-arginine biosynthesis; L-arginine from L-ornithine and carbamoyl phosphate: step 3/3. This Bacillus cereus (strain AH187) protein is Argininosuccinate lyase.